Reading from the N-terminus, the 422-residue chain is Tyrosine--tRNA ligase (422 aa).

Tyr-36 contributes to the L-tyrosine binding site. The 'HIGH' region signature appears at 41–50; sequence PTAGSLHIGH. The L-tyrosine site is built by Tyr-174 and Gln-178. The short motif at 234–238 is the 'KMSKS' region element; the sequence is KFGKT. Residue Lys-237 coordinates ATP. In terms of domain architecture, S4 RNA-binding spans 356 to 420; the sequence is TDLVTLLVES…GKKQYRLVTW (65 aa).

The protein belongs to the class-I aminoacyl-tRNA synthetase family. TyrS type 1 subfamily. Homodimer.

It is found in the cytoplasm. The catalysed reaction is tRNA(Tyr) + L-tyrosine + ATP = L-tyrosyl-tRNA(Tyr) + AMP + diphosphate + H(+). In terms of biological role, catalyzes the attachment of tyrosine to tRNA(Tyr) in a two-step reaction: tyrosine is first activated by ATP to form Tyr-AMP and then transferred to the acceptor end of tRNA(Tyr). The polypeptide is Tyrosine--tRNA ligase (Aeromonas hydrophila subsp. hydrophila (strain ATCC 7966 / DSM 30187 / BCRC 13018 / CCUG 14551 / JCM 1027 / KCTC 2358 / NCIMB 9240 / NCTC 8049)).